A 415-amino-acid polypeptide reads, in one-letter code: Serine hydroxymethyltransferase (415 aa).

(6S)-5,6,7,8-tetrahydrofolate is bound by residues Leu-120 and 124–126 (GHL). N6-(pyridoxal phosphate)lysine is present on Lys-229.

This sequence belongs to the SHMT family. As to quaternary structure, homodimer. It depends on pyridoxal 5'-phosphate as a cofactor.

It localises to the cytoplasm. The enzyme catalyses (6R)-5,10-methylene-5,6,7,8-tetrahydrofolate + glycine + H2O = (6S)-5,6,7,8-tetrahydrofolate + L-serine. The protein operates within one-carbon metabolism; tetrahydrofolate interconversion. Its pathway is amino-acid biosynthesis; glycine biosynthesis; glycine from L-serine: step 1/1. In terms of biological role, catalyzes the reversible interconversion of serine and glycine with tetrahydrofolate (THF) serving as the one-carbon carrier. This reaction serves as the major source of one-carbon groups required for the biosynthesis of purines, thymidylate, methionine, and other important biomolecules. Also exhibits THF-independent aldolase activity toward beta-hydroxyamino acids, producing glycine and aldehydes, via a retro-aldol mechanism. This Desulforudis audaxviator (strain MP104C) protein is Serine hydroxymethyltransferase.